The following is a 103-amino-acid chain: Large ribosomal subunit protein uL23 (103 aa).

Belongs to the universal ribosomal protein uL23 family. In terms of assembly, part of the 50S ribosomal subunit. Contacts protein L29, and trigger factor when it is bound to the ribosome.

Functionally, one of the early assembly proteins it binds 23S rRNA. One of the proteins that surrounds the polypeptide exit tunnel on the outside of the ribosome. Forms the main docking site for trigger factor binding to the ribosome. The polypeptide is Large ribosomal subunit protein uL23 (Aquifex aeolicus (strain VF5)).